Consider the following 307-residue polypeptide: D-alanine--D-alanine ligase (307 aa).

The ATP-grasp domain maps to 101–301; it reads KTVMRAAGVS…FGELVRWMVE (201 aa). 127–182 is a binding site for ATP; that stretch reads PLTPPYVVKPIAEGSSMGVIIVREERSHPPQILASDEWVYGEEVLAETYIAGRELT. Residues D251, E268, and N270 each contribute to the Mg(2+) site.

The protein belongs to the D-alanine--D-alanine ligase family. Requires Mg(2+) as cofactor. Mn(2+) serves as cofactor.

It is found in the cytoplasm. The catalysed reaction is 2 D-alanine + ATP = D-alanyl-D-alanine + ADP + phosphate + H(+). Its pathway is cell wall biogenesis; peptidoglycan biosynthesis. Its function is as follows. Cell wall formation. The polypeptide is D-alanine--D-alanine ligase (Methylorubrum populi (strain ATCC BAA-705 / NCIMB 13946 / BJ001) (Methylobacterium populi)).